A 298-amino-acid polypeptide reads, in one-letter code: Tyrosine recombinase XerC (298 aa).

The region spanning 2–88 is the Core-binding (CB) domain; sequence TDLHTDVERY…ALRSFFDWLV (87 aa). The Tyr recombinase domain maps to 109-288; sequence HLPKNIDVDD…DFQHLASVYD (180 aa). Catalysis depends on residues arginine 148, lysine 172, histidine 240, arginine 243, and histidine 266. Tyrosine 275 serves as the catalytic O-(3'-phospho-DNA)-tyrosine intermediate.

This sequence belongs to the 'phage' integrase family. XerC subfamily. As to quaternary structure, forms a cyclic heterotetrameric complex composed of two molecules of XerC and two molecules of XerD, in which XerC interacts with XerD via its C-terminal region, XerD interacts with XerC via its C-terminal region and so on.

The protein resides in the cytoplasm. FtsK may regulate the catalytic switch between XerC and XerD in the heterotetrameric complex during the two steps of the recombination process. In terms of biological role, site-specific tyrosine recombinase, which acts by catalyzing the cutting and rejoining of the recombining DNA molecules. Binds cooperatively to specific DNA consensus sequences that are separated from XerD binding sites by a short central region, forming the heterotetrameric XerC-XerD complex that recombines DNA substrates. The complex is essential to convert dimers of the bacterial chromosome into monomers to permit their segregation at cell division. It also contributes to the segregational stability of plasmids. In the complex XerC specifically exchanges the top DNA strands. The polypeptide is Tyrosine recombinase XerC (Shigella dysenteriae serotype 1 (strain Sd197)).